A 559-amino-acid polypeptide reads, in one-letter code: Cytoplasmic polyadenylation element-binding protein 1 (559 aa).

The disordered stretch occupies residues 222-243 (SRMDHSSSPLTPPPSASPSGSL). RRM domains follow at residues 304–401 (CKVF…DAQV) and 423–504 (NTVF…PYLE). Zn(2+) is bound by residues cysteine 508, cysteine 511, cysteine 520, cysteine 525, cysteine 530, cysteine 533, histidine 538, and histidine 546.

Belongs to the RRM CPEB family. In terms of tissue distribution, expressed in oocytes (at protein level). During oocyte maturation becomes detectable at stage Ib, and remains ubiquitously distributed within the oocyte cytoplasm until stage II. It then follows a gradual accumulation to the future animal pole during stage III, and remains localized to this pole at stage IV (at protein level). Expressed in oocytes, blastomeres and pre-mid-blastula transition embryos. Its expression during oogenesis is ubiquitous at stages I and II, but gradually accumulated at the periphery of the oocyte in the presumptive animal pole during stage III. Expression was maintained in that region at stage IV, and then became delocalized at stage V to cover a much broader area presumably encompassing the future blastodisc.

Its subcellular location is the cytoplasm. Its function is as follows. Sequence-specific RNA-binding protein that regulates mRNA cytoplasmic polyadenylation and translation initiation during oocyte maturation and early development. Binds to the cytoplasmic polyadenylation element (CPE), an uridine-rich sequence element (consensus sequence 5'-UUUUUAU-3') within the mRNA 3'-UTR. The sequence is that of Cytoplasmic polyadenylation element-binding protein 1 (cpeb1) from Danio rerio (Zebrafish).